The sequence spans 239 residues: Tetrahydromethanopterin S-methyltransferase subunit A (239 aa).

Over M1 to S215 the chain is Cytoplasmic. H85 provides a ligand contact to 5-hydroxybenzimidazolylcob(I)amide. Residues G216–L238 form a helical membrane-spanning segment. Residue L239 is a topological domain, extracellular.

This sequence belongs to the MtrA family. In terms of assembly, the complex is composed of 8 subunits; MtrA, MtrB, MtrC, MtrD, MtrE, MtrF, MtrG and MtrH. Requires 5-hydroxybenzimidazolylcob(I)amide as cofactor.

The protein localises to the cell membrane. It catalyses the reaction 5-methyl-5,6,7,8-tetrahydromethanopterin + coenzyme M + 2 Na(+)(in) = 5,6,7,8-tetrahydromethanopterin + methyl-coenzyme M + 2 Na(+)(out). The protein operates within one-carbon metabolism; methanogenesis from CO(2); methyl-coenzyme M from 5,10-methylene-5,6,7,8-tetrahydromethanopterin: step 2/2. Its function is as follows. Part of a complex that catalyzes the formation of methyl-coenzyme M and tetrahydromethanopterin from coenzyme M and methyl-tetrahydromethanopterin. This is an energy-conserving, sodium-ion translocating step. The polypeptide is Tetrahydromethanopterin S-methyltransferase subunit A (Methanococcus maripaludis (strain DSM 14266 / JCM 13030 / NBRC 101832 / S2 / LL)).